The sequence spans 303 residues: D-alanine--D-alanine ligase (303 aa).

Positions 102 to 298 (RILLAAAGLP…YPELCDWMVR (197 aa)) constitute an ATP-grasp domain. 128–181 (PLPAPYVIKPVAEGSSVGVEIVRTGDNRRAEIARTWRFGKEALVESFIPGRELT) lines the ATP pocket. Residues aspartate 251, glutamate 265, and asparagine 267 each contribute to the Mg(2+) site.

Belongs to the D-alanine--D-alanine ligase family. It depends on Mg(2+) as a cofactor. Mn(2+) serves as cofactor.

The protein resides in the cytoplasm. The enzyme catalyses 2 D-alanine + ATP = D-alanyl-D-alanine + ADP + phosphate + H(+). The protein operates within cell wall biogenesis; peptidoglycan biosynthesis. Cell wall formation. In Gluconobacter oxydans (strain 621H) (Gluconobacter suboxydans), this protein is D-alanine--D-alanine ligase.